Consider the following 289-residue polypeptide: BTB/POZ domain-containing protein KCTD7 (289 aa).

Residues methionine 1–leucine 42 form a disordered region. The region spanning valine 53–leucine 141 is the BTB domain.

Interacts with CUL3.

It is found in the cell membrane. Its subcellular location is the cytoplasm. The protein localises to the cytosol. Functionally, may be involved in the control of excitability of cortical neurons. This is BTB/POZ domain-containing protein KCTD7 (Kctd7) from Rattus norvegicus (Rat).